We begin with the raw amino-acid sequence, 138 residues long: Basic phospholipase A2 PL-Y (138 aa).

Positions Met-1–Gly-16 are cleaved as a signal peptide. Intrachain disulfides connect Cys-42/Cys-131, Cys-44/Cys-60, Cys-59/Cys-111, Cys-65/Cys-138, Cys-66/Cys-104, Cys-73/Cys-97, and Cys-91/Cys-102. Tyr-43, Gly-45, and Gly-47 together coordinate Ca(2+). His-63 is an active-site residue. Asp-64 contacts Ca(2+). Residue Asp-105 is part of the active site.

This sequence belongs to the phospholipase A2 family. Group II subfamily. D49 sub-subfamily. Ca(2+) is required as a cofactor. In terms of tissue distribution, expressed by the venom gland.

It is found in the secreted. The enzyme catalyses a 1,2-diacyl-sn-glycero-3-phosphocholine + H2O = a 1-acyl-sn-glycero-3-phosphocholine + a fatty acid + H(+). Functionally, snake venom phospholipase A2 (PLA2) that can cleave arachidonate at the sn-2 position from phospholipides in the micellar state or in bilayer membranes. PLA2 catalyzes the calcium-dependent hydrolysis of the 2-acyl groups in 3-sn-phosphoglycerides. The protein is Basic phospholipase A2 PL-Y of Protobothrops flavoviridis (Habu).